A 124-amino-acid polypeptide reads, in one-letter code: Large ribosomal subunit protein bL12 (124 aa).

This sequence belongs to the bacterial ribosomal protein bL12 family. In terms of assembly, homodimer. Part of the ribosomal stalk of the 50S ribosomal subunit. Forms a multimeric L10(L12)X complex, where L10 forms an elongated spine to which 2 to 4 L12 dimers bind in a sequential fashion. Binds GTP-bound translation factors.

Its function is as follows. Forms part of the ribosomal stalk which helps the ribosome interact with GTP-bound translation factors. Is thus essential for accurate translation. The polypeptide is Large ribosomal subunit protein bL12 (Burkholderia thailandensis (strain ATCC 700388 / DSM 13276 / CCUG 48851 / CIP 106301 / E264)).